The chain runs to 248 residues: Protein-lysine N-methyltransferase EFM5 (248 aa).

This sequence belongs to the class I-like SAM-binding methyltransferase superfamily. EFM5 family.

It localises to the cytoplasm. Its function is as follows. S-adenosyl-L-methionine-dependent protein-lysine N-methyltransferase that trimethylates elongation factor 1-alpha (TEF1 and TEF2) at 'Lys-79'. Required for replication of Brome mosaic virus (BMV). This Saccharomyces cerevisiae (strain ATCC 204508 / S288c) (Baker's yeast) protein is Protein-lysine N-methyltransferase EFM5.